A 313-amino-acid polypeptide reads, in one-letter code: Protochlorophyllide reductase (313 aa).

It belongs to the short-chain dehydrogenases/reductases (SDR) family. POR subfamily.

It localises to the plastid. The protein localises to the chloroplast. The enzyme catalyses chlorophyllide a + NADP(+) = protochlorophyllide a + NADPH + H(+). It participates in porphyrin-containing compound metabolism; chlorophyll biosynthesis. In terms of biological role, phototransformation of protochlorophyllide (Pchlide) to chlorophyllide (Chlide). The sequence is that of Protochlorophyllide reductase from Avena sativa (Oat).